A 375-amino-acid polypeptide reads, in one-letter code: Chaperone protein DnaJ (375 aa).

Residues 5–70 (DFYEVLGVEK…QKRAQYDQFG (66 aa)) enclose the J domain. The CR-type zinc finger occupies 134–216 (GVEKEVSITK…CKGKGTVRKQ (83 aa)). Zn(2+) contacts are provided by cysteine 147, cysteine 150, cysteine 164, cysteine 167, cysteine 190, cysteine 193, cysteine 204, and cysteine 207. 4 CXXCXGXG motif repeats span residues 147-154 (CETCTGTG), 164-171 (CPKCNGSG), 190-197 (CDMCGGKG), and 204-211 (CSDCKGKG).

This sequence belongs to the DnaJ family. Homodimer. Requires Zn(2+) as cofactor.

The protein localises to the cytoplasm. Participates actively in the response to hyperosmotic and heat shock by preventing the aggregation of stress-denatured proteins and by disaggregating proteins, also in an autonomous, DnaK-independent fashion. Unfolded proteins bind initially to DnaJ; upon interaction with the DnaJ-bound protein, DnaK hydrolyzes its bound ATP, resulting in the formation of a stable complex. GrpE releases ADP from DnaK; ATP binding to DnaK triggers the release of the substrate protein, thus completing the reaction cycle. Several rounds of ATP-dependent interactions between DnaJ, DnaK and GrpE are required for fully efficient folding. Also involved, together with DnaK and GrpE, in the DNA replication of plasmids through activation of initiation proteins. In Clostridium tetani (strain Massachusetts / E88), this protein is Chaperone protein DnaJ.